We begin with the raw amino-acid sequence, 92 residues long: Small ribosomal subunit protein uS19 (92 aa).

Belongs to the universal ribosomal protein uS19 family.

Protein S19 forms a complex with S13 that binds strongly to the 16S ribosomal RNA. This Corynebacterium efficiens (strain DSM 44549 / YS-314 / AJ 12310 / JCM 11189 / NBRC 100395) protein is Small ribosomal subunit protein uS19.